A 336-amino-acid polypeptide reads, in one-letter code: Alpha-N-acetylgalactosaminide alpha-2,6-sialyltransferase 5 (336 aa).

The Cytoplasmic portion of the chain corresponds to 1–8 (MKTLMRHG). A helical; Signal-anchor for type II membrane protein transmembrane segment spans residues 9–29 (LAVCLALTTMCTSLLLVYSSL). Residues 30 to 336 (GGQKERPPQQ…INHPENKPVF (307 aa)) lie on the Lumenal side of the membrane. Residues 32 to 81 (QKERPPQQQQQQQQQQQQASATGSSQPAAESSTQQRPGVPAGPRPLDGYL) are disordered. The span at 38–49 (QQQQQQQQQQQQ) shows a compositional bias: low complexity. Residues 50–67 (ASATGSSQPAAESSTQQR) show a composition bias toward polar residues. Cys96 and Cys245 are oxidised to a cystine. Asn137 and Asn161 each carry an N-linked (GlcNAc...) asparagine glycan.

The protein belongs to the glycosyltransferase 29 family.

Its subcellular location is the golgi apparatus membrane. It carries out the reaction a ganglioside GM1b (d18:1(4E)) + CMP-N-acetyl-beta-neuraminate = a ganglioside GD1alpha (d18:1(4E)) + CMP + H(+). The enzyme catalyses N-acetyl-alpha-neuraminosyl-(2-&gt;3)-beta-D-galactosyl-(1-&gt;3)-N-acetyl-beta-D-glucosaminyl-(1-&gt;3)-beta-D-galactosyl-(1-&gt;4)-beta-D-glucosyl-(1&lt;-&gt;1')-N-acyl-sphing-4-enine + CMP-N-acetyl-beta-neuraminate = N-acetyl-alpha-neuraminosyl-(2-&gt;3)-beta-D-galactosyl-(1-&gt;3)-[N-acetyl-alpha-neuraminosyl-(2-&gt;6)]-N-acetyl-beta-D-glucosaminyl-(1-&gt;3)-beta-D-galactosyl-(1-&gt;4)-beta-D-glucosyl-(1&lt;-&gt;1')-N-acyl-sphing-4-enine + CMP + H(+). It functions in the pathway glycolipid biosynthesis. In terms of biological role, predominantly catalyzes the biosynthesis of ganglioside GD1alpha from GM1b in the brain, by transferring the sialyl group (N-acetyl-alpha-neuraminyl or NeuAc) from CMP-NeuAc to the GalNAc residue on the NeuAc-alpha-2,3-Gal-beta-1,3-GalNAc sequence of GM1b. GD1alpha is a critical molecule in the communication and interaction between neuronal cells and their supportive cells, particularly in brain tissues, and functions as an adhesion molecule in the process of metastasis. Also shows activity towards sialyl Lc4Cer (N-acetyl-alpha-neuraminosyl-(2-&gt;3)-beta-D-galactosyl-(1-&gt;3)-N-acetyl-beta-D-glucosaminyl-(1-&gt;3)-beta-D-galactosyl-(1-&gt;4)-beta-D-glucosyl-(1&lt;-&gt;1')-N-acyl-sphing-4-enine) generating disialyl Lc4Cer, which can lead to the synthesis of disialyl Lewis a (Le(a)), suggested to be a cancer-associated antigen. This is Alpha-N-acetylgalactosaminide alpha-2,6-sialyltransferase 5 (ST6GALNAC5) from Homo sapiens (Human).